A 510-amino-acid polypeptide reads, in one-letter code: RNA-splicing ligase RtcB homolog (510 aa).

The Mn(2+) site is built by Asp124, Cys127, His232, His264, and His358. 231–235 contacts GMP; that stretch reads NHYAE. GMP-binding positions include 358–359, 407–410, Ser414, 433–436, and Lys509; these read HN, GGTM, and HGAG. His433 serves as the catalytic GMP-histidine intermediate.

It belongs to the RtcB family. In terms of assembly, catalytic component of the tRNA-splicing ligase complex. Requires Mn(2+) as cofactor.

The enzyme catalyses a 3'-end 3'-phospho-ribonucleotide-RNA + a 5'-end dephospho-ribonucleoside-RNA + GTP = a ribonucleotidyl-ribonucleotide-RNA + GMP + diphosphate. It carries out the reaction a 3'-end 2',3'-cyclophospho-ribonucleotide-RNA + a 5'-end dephospho-ribonucleoside-RNA + GTP + H2O = a ribonucleotidyl-ribonucleotide-RNA + GMP + diphosphate + H(+). Catalytic subunit of the tRNA-splicing ligase complex that acts by directly joining spliced tRNA halves to mature-sized tRNAs by incorporating the precursor-derived splice junction phosphate into the mature tRNA as a canonical 3',5'-phosphodiester. May act as an RNA ligase with broad substrate specificity, and may function toward other RNAs. The protein is RNA-splicing ligase RtcB homolog of Trichoplax adhaerens (Trichoplax reptans).